We begin with the raw amino-acid sequence, 362 residues long: Isopentenyl-diphosphate delta-isomerase (362 aa).

6 to 7 lines the substrate pocket; it reads RK. Residues 65-67, S95, and N124 each bind FMN; that span reads SIT. 95 to 97 contributes to the substrate binding site; the sequence is SQR. Residue Q158 participates in substrate binding. E159 is a binding site for Mg(2+). Residues K189, T219, 269 to 271, and 290 to 291 each bind FMN; these read GVR and AL.

The protein belongs to the IPP isomerase type 2 family. Homooctamer. Dimer of tetramers. Requires FMN as cofactor. It depends on NADPH as a cofactor. Mg(2+) is required as a cofactor.

The protein localises to the cytoplasm. The catalysed reaction is isopentenyl diphosphate = dimethylallyl diphosphate. Functionally, involved in the biosynthesis of isoprenoids. Catalyzes the 1,3-allylic rearrangement of the homoallylic substrate isopentenyl (IPP) to its allylic isomer, dimethylallyl diphosphate (DMAPP). The sequence is that of Isopentenyl-diphosphate delta-isomerase from Methanococcoides burtonii (strain DSM 6242 / NBRC 107633 / OCM 468 / ACE-M).